A 294-amino-acid polypeptide reads, in one-letter code: UPF0718 protein YcgR (294 aa).

Transmembrane regions (helical) follow at residues 15 to 35 (ISIL…SGII), 54 to 74 (LAVL…CGII), 92 to 112 (AFML…YIAF), 117 to 137 (SVVF…GVIL), 174 to 194 (IDEF…AAAM), 215 to 235 (LVMM…AFIA), 247 to 267 (LIAF…MMLA), and 273 to 293 (FVFL…LLVK).

This sequence belongs to the UPF0718 family.

The protein localises to the cell membrane. This is UPF0718 protein YcgR (ycgR) from Bacillus subtilis (strain 168).